Here is a 500-residue protein sequence, read N- to C-terminus: MGLLTGDLLGILALAMVIFLLLVDLMHRRSRWAPRYPPGPMPLPGLGNLLQVNFQDPRLSFIQLRRRFGDVFSLQQIWRPVVVLNGLAAVREALVSHSHETSDRPPVFILEHLGYGPRSEGVILARYGKAWREQRRFSVSTLRNFGLGKKSLEEWVTQEASCLCAAFADQAGRPFSPNNLLNKAVSNVIASLTFARRFEYNDPRMLKLLDLVLEGLKEEVGLMRQVLEAMPVLRHIPGLCAKLFPRQKAFLVMIDELITEHKMTRDLAQPPRDLTDAFLDEMKEAKGNPESSFNDENLRLVVAHLFSAGMITTSTTLAWALLLMILHPDVQRRVQQEIDEVIGHVRQPEIKDQALMPFTLAVLHEVQRFGDIVPLGVAHMTSCDIEVQGFLIPKGTTLITNLTSVLKDETVWKKPFRFYPEHFLDAQGRFTKQEAFMPFSAGRRSCLGEPLARMELFLFFTTLLQAFSFSVPTGQPCPSDHGVFAFLLFPSPYQLCAVPR.

Cys446 is a binding site for heme.

It belongs to the cytochrome P450 family. The cofactor is heme. Found in liver and kidney.

The protein resides in the endoplasmic reticulum membrane. Its subcellular location is the microsome membrane. It catalyses the reaction calciol + reduced [NADPH--hemoprotein reductase] + O2 = calcidiol + oxidized [NADPH--hemoprotein reductase] + H2O + H(+). The enzyme catalyses alfacalcidol + reduced [NADPH--hemoprotein reductase] + O2 = calcitriol + oxidized [NADPH--hemoprotein reductase] + H2O + H(+). It carries out the reaction dodecanoate + reduced [NADPH--hemoprotein reductase] + O2 = 12-hydroxydodecanoate + oxidized [NADPH--hemoprotein reductase] + H2O + H(+). The catalysed reaction is dodecanoate + reduced [NADPH--hemoprotein reductase] + O2 = 11-hydroxydodecanoate + oxidized [NADPH--hemoprotein reductase] + H2O + H(+). It catalyses the reaction 5beta-cholestane-3alpha,7alpha-diol + reduced [NADPH--hemoprotein reductase] + O2 = 5beta-cholestane-3alpha,7alpha,25-triol + oxidized [NADPH--hemoprotein reductase] + H2O + H(+). The enzyme catalyses 5beta-cholestane-3alpha,7alpha,12alpha-triol + reduced [NADPH--hemoprotein reductase] + O2 = 5beta-cholestane-3alpha,7alpha,12alpha,25-tetrol + oxidized [NADPH--hemoprotein reductase] + H2O + H(+). Catalyzes the 25-hydroxylation of vitamin D(3) (calciol), 1alpha-hydroxyvitamin D(3) (alphacalcidiol) and some C27 steroids. In addition the enzyme catalyzes the hydroxylation of positions 11 and 12 of dodecanoate. In Sus scrofa (Pig), this protein is Vitamin D(3) 25-hydroxylase (CYP2D25).